We begin with the raw amino-acid sequence, 122 residues long: Large ribosomal subunit protein uL14c (122 aa).

Belongs to the universal ribosomal protein uL14 family. As to quaternary structure, part of the 50S ribosomal subunit.

It is found in the plastid. The protein resides in the chloroplast. Binds to 23S rRNA. The sequence is that of Large ribosomal subunit protein uL14c from Angiopteris evecta (Mule's foot fern).